The chain runs to 153 residues: SKP1-like protein 9 (153 aa).

The interaction with the F-box domain of F-box proteins stretch occupies residues 95–153; the sequence is IKAANYLNIKSLFDLACQTVAEIIKGNTPEQIREFFNIENDLTPEEEAAIRRENKWAFE.

It belongs to the SKP1 family. As to quaternary structure, part of a SCF (SKP1-cullin-F-box) protein ligase complex. Interacts with CPR1/CPR30 and At3g61590. As to expression, expressed in leaves, shoot apical meristem (SAM), roots, flowers and pollen.

It is found in the nucleus. It functions in the pathway protein modification; protein ubiquitination. Its function is as follows. Involved in ubiquitination and subsequent proteasomal degradation of target proteins. Together with CUL1, RBX1 and a F-box protein, it forms a SCF E3 ubiquitin ligase complex. The functional specificity of this complex depends on the type of F-box protein. In the SCF complex, it serves as an adapter that links the F-box protein to CUL1. The polypeptide is SKP1-like protein 9 (ASK9) (Arabidopsis thaliana (Mouse-ear cress)).